Reading from the N-terminus, the 1012-residue chain is DNA polymerase catalytic subunit (1012 aa).

It belongs to the DNA polymerase type-B family.

Its subcellular location is the host nucleus. It carries out the reaction DNA(n) + a 2'-deoxyribonucleoside 5'-triphosphate = DNA(n+1) + diphosphate. Its function is as follows. Replicates viral genomic DNA. This Human herpesvirus 6B (strain Z29) (HHV-6 variant B) protein is DNA polymerase catalytic subunit (U38).